The sequence spans 527 residues: Berberine bridge enzyme-like 5 (527 aa).

An N-terminal signal peptide occupies residues 1–19 (MKALFSVLCLVLLVSILRA). Cysteines 32 and 95 form a disulfide. N-linked (GlcNAc...) asparagine glycans are attached at residues Asn-35 and Asn-52. An FAD-binding PCMH-type domain is found at 73–247 (NYQKLVAIVA…LSWKINLVEV (175 aa)). Residues 110–172 (HDYEGLSYTS…QTLAFPAGVC (63 aa)) constitute a cross-link (6-(S-cysteinyl)-8alpha-(pros-histidyl)-FAD (His-Cys)). Asn-341 is a glycosylation site (N-linked (GlcNAc...) asparagine).

Belongs to the oxygen-dependent FAD-linked oxidoreductase family. FAD is required as a cofactor. The FAD cofactor is bound via a bicovalent 6-S-cysteinyl, 8alpha-N1-histidyl FAD linkage.

Its subcellular location is the secreted. It is found in the cell wall. Functionally, probable flavin-dependent oxidoreductase. The polypeptide is Berberine bridge enzyme-like 5 (Arabidopsis thaliana (Mouse-ear cress)).